Consider the following 376-residue polypeptide: Carbohydrate sulfotransferase 14 (376 aa).

Residues 1–30 (MFPRPLTPLAAPKSAETLGRTPRRAPLGRA) are disordered. Residues 1 to 39 (MFPRPLTPLAAPKSAETLGRTPRRAPLGRARAGLGGPPL) lie on the Cytoplasmic side of the membrane. Residues 18 to 30 (LGRTPRRAPLGRA) show a composition bias toward low complexity. The chain crosses the membrane as a helical; Signal-anchor for type II membrane protein span at residues 40-60 (LLPSMLMFAVIVASSGLLLMI). The Lumenal portion of the chain corresponds to 61–376 (ERGILSEMKP…PNVTKEACHQ (316 aa)). The interval 76 to 96 (PSHKGAAWSGTDPKPRGLSLD) is disordered. An N-linked (GlcNAc...) asparagine glycan is attached at Asn-110. Residues 155–161 (PKVACSN) and 213–221 (RDPLERLLS) contribute to the 3'-phosphoadenylyl sulfate site. N-linked (GlcNAc...) asparagine glycosylation is present at Asn-368.

The protein belongs to the sulfotransferase 2 family.

It localises to the golgi apparatus membrane. The catalysed reaction is dermatan + n 3'-phosphoadenylyl sulfate = dermatan 4'-sulfate + n adenosine 3',5'-bisphosphate + n H(+). In terms of biological role, catalyzes the transfer of sulfate to position 4 of the N-acetylgalactosamine (GalNAc) residue of dermatan sulfate. Plays a pivotal role in the formation of 4-0-sulfated IdoA blocks in dermatan sulfate. Transfers sulfate to the C-4 hydroxyl of beta1,4-linked GalNAc that is substituted with an alpha-linked iduronic acid (IdoUA) at the C-3 hydroxyl. Transfers sulfate more efficiently to GalNAc residues in -IdoUA-GalNAc-IdoUA- than in -GlcUA-GalNAc-GlcUA-sequences. Has preference for partially desulfated dermatan sulfate. Addition of sulfate to GalNAc may occur immediately after epimerization of GlcUA to IdoUA. Appears to have an important role in the formation of the cerebellar neural network during postnatal brain development. The polypeptide is Carbohydrate sulfotransferase 14 (Chst14) (Mus musculus (Mouse)).